The chain runs to 288 residues: MNNLSFSELCCLFCCPPCPGKIASKLAFLPPDPTYTLMCDESGSRWTLHLSERADWQYSSREKDAIECFMTRTSKGNRIACMFVRCSPNAKYTLLFSHGNAVDLGQMSSFYIGLGSRINCNIFSYDYSGYGASSGKPSEKNLYADIDAAWVALRTRYGIRPENVIIYGQSIGTVPSVDLAARYESAAVILHSPLTSGMRVAFPDTKKTYCFDAFPNIDKISKITSPVLIIHGTEDEVIDFSHGLALFERCQRPVEPLWVEGAGHNDVELYGQYLERLKRFVSQELVNL.

Catalysis depends on charge relay system residues serine 170, aspartate 235, and histidine 264.

This sequence belongs to the AB hydrolase superfamily. ABHD17 family. In terms of processing, palmitoylated on cysteine residues located in a cysteine cluster at the N-terminus which promotes membrane localization.

The protein resides in the cell membrane. It is found in the recycling endosome membrane. It localises to the cell projection. The protein localises to the dendritic spine. Its subcellular location is the postsynaptic density membrane. The catalysed reaction is S-hexadecanoyl-L-cysteinyl-[protein] + H2O = L-cysteinyl-[protein] + hexadecanoate + H(+). Its function is as follows. Hydrolyzes fatty acids from S-acylated cysteine residues in proteins. Has depalmitoylating activity towards NRAS. The protein is Alpha/beta hydrolase domain-containing protein 17B of Gallus gallus (Chicken).